The following is a 373-amino-acid chain: Dual-specificity RNA methyltransferase RlmN (373 aa).

The Proton acceptor role is filled by Glu-94. The region spanning 100–339 (EDDRATLCVS…VIVRKTRGDD (240 aa)) is the Radical SAM core domain. The cysteines at positions 107 and 344 are disulfide-linked. The [4Fe-4S] cluster site is built by Cys-114, Cys-118, and Cys-121. S-adenosyl-L-methionine-binding positions include 168–169 (GE), Ser-200, 222–224 (SIH), and Asn-301. Cys-344 acts as the S-methylcysteine intermediate in catalysis.

It belongs to the radical SAM superfamily. RlmN family. [4Fe-4S] cluster is required as a cofactor.

The protein localises to the cytoplasm. It catalyses the reaction adenosine(2503) in 23S rRNA + 2 reduced [2Fe-2S]-[ferredoxin] + 2 S-adenosyl-L-methionine = 2-methyladenosine(2503) in 23S rRNA + 5'-deoxyadenosine + L-methionine + 2 oxidized [2Fe-2S]-[ferredoxin] + S-adenosyl-L-homocysteine. It carries out the reaction adenosine(37) in tRNA + 2 reduced [2Fe-2S]-[ferredoxin] + 2 S-adenosyl-L-methionine = 2-methyladenosine(37) in tRNA + 5'-deoxyadenosine + L-methionine + 2 oxidized [2Fe-2S]-[ferredoxin] + S-adenosyl-L-homocysteine. Functionally, specifically methylates position 2 of adenine 2503 in 23S rRNA and position 2 of adenine 37 in tRNAs. m2A2503 modification seems to play a crucial role in the proofreading step occurring at the peptidyl transferase center and thus would serve to optimize ribosomal fidelity. This chain is Dual-specificity RNA methyltransferase RlmN, found in Shewanella sp. (strain MR-4).